The primary structure comprises 334 residues: Nucleoid-associated protein VS_0951 (334 aa).

This sequence belongs to the YejK family.

Its subcellular location is the cytoplasm. It is found in the nucleoid. This Vibrio atlanticus (strain LGP32) (Vibrio splendidus (strain Mel32)) protein is Nucleoid-associated protein VS_0951.